We begin with the raw amino-acid sequence, 718 residues long: Protein Hook homolog 3 (718 aa).

Met1 carries the N-acetylmethionine modification. Residues 1–164 (MFSVESLERA…QELMSKESPV (164 aa)) are sufficient for interaction with microtubules. A phosphoserine mark is found at Ser3 and Ser6. Positions 10–126 (AELCESLLTW…RMLQLILGCA (117 aa)) constitute a Calponin-homology (CH) domain. 2 coiled-coil regions span residues 167–433 (GNDA…VQAQ) and 462–667 (EIRE…YIVS). Ser238 is subject to Phosphoserine. A required for association with Golgi region spans residues 553-718 (EKLHEANNEL…PGHVQPATAR (166 aa)). The interval 556–718 (HEANNELQKK…PGHVQPATAR (163 aa)) is required for interaction with MSR1. Residues 682–718 (EDRLASTGSGQSFLARQRQATSSRRSYPGHVQPATAR) form a disordered region. Ser693 and Ser707 each carry phosphoserine. The span at 696–707 (ARQRQATSSRRS) shows a compositional bias: low complexity.

The protein belongs to the hook family. As to quaternary structure, self-associates. Component of the FTS/Hook/FHIP complex (FHF complex), composed of AKTIP/FTS, FHIP1B, and one or more members of the Hook family of proteins HOOK1, HOOK2, and HOOK3. May interact directly with AKTIP/FTS, HOOK1 and HOOK2. Associates with several subunits of the homotypic vesicular sorting complex (the HOPS complex) including VPS16 and VPS41; these interactions may be indirect. Interacts with MSR1, and this association is stimulated by ligand binding to MSR1. Interacts with microtubules. Part of a tripartite complex with dynein and dynactin, acts an adapter linking the dynein motor complex and dynactin. Interacts with dynein intermediate chain and dynactin (DCTN1). Interacts with CCDC181. Interacts with LRGUK. (Microbial infection) Interacts with Salmonella typhimurium spiC.

Its subcellular location is the cytoplasm. It localises to the cytoskeleton. The protein resides in the golgi apparatus. In terms of biological role, acts as an adapter protein linking the dynein motor complex to various cargos and converts dynein from a non-processive to a highly processive motor in the presence of dynactin. Facilitates the interaction between dynein and dynactin and activates dynein processivity (the ability to move along a microtubule for a long distance without falling off the track). Predominantly recruits 2 dyneins, which increases both the force and speed of the microtubule motor. Component of the FTS/Hook/FHIP complex (FHF complex). The FHF complex may function to promote vesicle trafficking and/or fusion via the homotypic vesicular protein sorting complex (the HOPS complex). May regulate clearance of endocytosed receptors such as MSR1. Participates in defining the architecture and localization of the Golgi complex. FHF complex promotes the distribution of AP-4 complex to the perinuclear area of the cell. Its function is as follows. (Microbial infection) May serve as a target for the spiC protein from Salmonella typhimurium, which inactivates it, leading to a strong alteration in cellular trafficking. The sequence is that of Protein Hook homolog 3 from Homo sapiens (Human).